Consider the following 212-residue polypeptide: Pyrrolidone-carboxylate peptidase (212 aa).

Active-site residues include Glu-80, Cys-143, and His-165.

Belongs to the peptidase C15 family. In terms of assembly, homotetramer.

The protein localises to the cytoplasm. It catalyses the reaction Release of an N-terminal pyroglutamyl group from a polypeptide, the second amino acid generally not being Pro.. In terms of biological role, removes 5-oxoproline from various penultimate amino acid residues except L-proline. This is Pyrrolidone-carboxylate peptidase from Aliivibrio fischeri (strain MJ11) (Vibrio fischeri).